Consider the following 145-residue polypeptide: uncharacterized protein (145 aa).

This sequence belongs to the methyltransferase superfamily.

Probable methyltransferase. This is an uncharacterized protein from Schizosaccharomyces pombe (strain 972 / ATCC 24843) (Fission yeast).